The primary structure comprises 188 residues: Ubiquitin-conjugating enzyme E2-21 kDa (188 aa).

One can recognise a UBC core domain in the interval 3–182 (STEKRLLKEY…VHYYIAKYSA (180 aa)). Cys119 functions as the Glycyl thioester intermediate in the catalytic mechanism.

It belongs to the ubiquitin-conjugating enzyme family.

The enzyme catalyses S-ubiquitinyl-[E1 ubiquitin-activating enzyme]-L-cysteine + [E2 ubiquitin-conjugating enzyme]-L-cysteine = [E1 ubiquitin-activating enzyme]-L-cysteine + S-ubiquitinyl-[E2 ubiquitin-conjugating enzyme]-L-cysteine.. It functions in the pathway protein modification; protein ubiquitination. In terms of biological role, catalyzes the covalent attachment of ubiquitin to other proteins. Essential for peroxisome biogenesis. Required for UBC4-independent ubiquitination of PEX5. This chain is Ubiquitin-conjugating enzyme E2-21 kDa (PEX4), found in Pichia angusta (Yeast).